Consider the following 499-residue polypeptide: Probable dipeptidase B (499 aa).

Cys26 is an active-site residue.

This sequence belongs to the peptidase C69 family.

The catalysed reaction is an L-aminoacyl-L-amino acid + H2O = 2 an L-alpha-amino acid. In Streptococcus pyogenes serotype M6 (strain ATCC BAA-946 / MGAS10394), this protein is Probable dipeptidase B (pepDB).